We begin with the raw amino-acid sequence, 445 residues long: Reticulon-4 receptor-like 1 (445 aa).

A signal peptide spans 1–24 (MLRKGCCVELLLLLLAGELPLGGG). Residues 25-54 (CPRDCVCYPAPMTVSCQAHNFAAIPEGIPE) enclose the LRRNT domain. LRR repeat units follow at residues 55-76 (DSERIFLQNNRITFLQQGHFSP), 77-98 (AMVTLWIYSNNITFIAPNTFEG), 101-123 (HLEELDLGDNRQLRTLAPETFQG), 126-147 (KLHALYLYKCGLSALPAGIFGG), 150-171 (SLQYLYLQDNHIEYLQDDIFVD), 174-195 (NLSHLFLHGNKLWSLGQGIFRG), 198-219 (NLDRLLLHENQLQWVHHKAFHD), and 222-243 (RLTTLFLFNNSLTELQGDCLAP). In terms of domain architecture, LRRCT spans 255–306 (NAWDCGCRARSLWEWLRRFRGSSSAVPCATPELRQGQDLKLLRVEDFRNCTG). Disordered regions lie at residues 307 to 377 (PVSP…SGKE) and 401 to 424 (RPKRKGKCARRTPIRAPSGVQQAS). Basic residues-rich tracts occupy residues 352–366 (GYKKAGKNCTSHRNR) and 401–413 (RPKRKGKCARRTP). The GPI-anchor amidated serine moiety is linked to residue Ser424. The chain crosses the membrane as a helical span at residues 424–444 (SSGTALGAPLLAWILGLAVTL). Positions 425-445 (SGTALGAPLLAWILGLAVTLR) are cleaved as a propeptide — removed in mature form.

This sequence belongs to the Nogo receptor family. In terms of assembly, identified in a complex that contains RTN4R, RTN4RL1 and NGFR; the interaction depends on the presence of chondroitin sulfate proteoglycans. Does not interact with MAG, OMG and RTN4. In terms of tissue distribution, detected in brain (at protein level). Detected in retina ganglion cell layer and inner nuclear layer.

The protein localises to the cell membrane. Its subcellular location is the membrane raft. It is found in the perikaryon. It localises to the cell projection. Cell surface receptor that plays a functionally redundant role in postnatal brain development and in regulating axon regeneration in the adult central nervous system. Contributes to normal axon migration across the brain midline and normal formation of the corpus callosum. Protects motoneurons against apoptosis; protection against apoptosis is probably mediated by MAG. Plays a role in inhibiting neurite outgrowth and axon regeneration via its binding to neuronal chondroitin sulfate proteoglycans. Binds heparin. Like other family members, plays a role in restricting the number dendritic spines and the number of synapses that are formed during brain development. Signaling mediates activation of Rho and downstream reorganization of the actin cytoskeleton. The sequence is that of Reticulon-4 receptor-like 1 from Mus musculus (Mouse).